A 131-amino-acid chain; its full sequence is Ribosome-binding factor A (131 aa).

A disordered region spans residues 110-131 (QMNLGEDNEDNEDKENNDPGEE). A compositionally biased stretch (acidic residues) spans 115–131 (EDNEDNEDKENNDPGEE).

It belongs to the RbfA family. As to quaternary structure, monomer. Binds 30S ribosomal subunits, but not 50S ribosomal subunits or 70S ribosomes.

It localises to the cytoplasm. Functionally, one of several proteins that assist in the late maturation steps of the functional core of the 30S ribosomal subunit. Associates with free 30S ribosomal subunits (but not with 30S subunits that are part of 70S ribosomes or polysomes). Required for efficient processing of 16S rRNA. May interact with the 5'-terminal helix region of 16S rRNA. This chain is Ribosome-binding factor A, found in Natranaerobius thermophilus (strain ATCC BAA-1301 / DSM 18059 / JW/NM-WN-LF).